Reading from the N-terminus, the 183-residue chain is Translation initiation factor IF-3 (183 aa).

The protein belongs to the IF-3 family. Monomer.

Its subcellular location is the cytoplasm. Its function is as follows. IF-3 binds to the 30S ribosomal subunit and shifts the equilibrium between 70S ribosomes and their 50S and 30S subunits in favor of the free subunits, thus enhancing the availability of 30S subunits on which protein synthesis initiation begins. This is Translation initiation factor IF-3 from Pseudomonas aeruginosa (strain ATCC 15692 / DSM 22644 / CIP 104116 / JCM 14847 / LMG 12228 / 1C / PRS 101 / PAO1).